A 152-amino-acid polypeptide reads, in one-letter code: Flagellar assembly factor FliW (152 aa).

It belongs to the FliW family. Interacts with translational regulator CsrA and flagellin(s).

It localises to the cytoplasm. Its function is as follows. Acts as an anti-CsrA protein, binds CsrA and prevents it from repressing translation of its target genes, one of which is flagellin. Binds to flagellin and participates in the assembly of the flagellum. In Caldicellulosiruptor saccharolyticus (strain ATCC 43494 / DSM 8903 / Tp8T 6331), this protein is Flagellar assembly factor FliW.